The chain runs to 390 residues: Endoglucanase gh5-1 (390 aa).

The N-terminal stretch at 1–16 is a signal peptide; that stretch reads MKATILASTFAAGALA. The 36-residue stretch at 17 to 52 folds into the CBM1 domain; the sequence is QSGAWGQCGGNGWSGATSCISGYACNYVNDWYSQCQ. 2 N-linked (GlcNAc...) asparagine glycosylation sites follow: N157 and N261.

It belongs to the glycosyl hydrolase 5 (cellulase A) family. N-glycosylated.

The protein localises to the secreted. It carries out the reaction Endohydrolysis of (1-&gt;4)-beta-D-glucosidic linkages in cellulose, lichenin and cereal beta-D-glucans.. Functionally, endoglucanase that plays an important role in biomass degradation. Binds onto plant cell walls to participate in the hydrolysis of cellulose. This chain is Endoglucanase gh5-1, found in Neurospora crassa (strain ATCC 24698 / 74-OR23-1A / CBS 708.71 / DSM 1257 / FGSC 987).